A 340-amino-acid polypeptide reads, in one-letter code: Tetraacyldisaccharide 4'-kinase (340 aa).

H51 to T58 lines the ATP pocket.

This sequence belongs to the LpxK family.

The catalysed reaction is a lipid A disaccharide + ATP = a lipid IVA + ADP + H(+). Its pathway is glycolipid biosynthesis; lipid IV(A) biosynthesis; lipid IV(A) from (3R)-3-hydroxytetradecanoyl-[acyl-carrier-protein] and UDP-N-acetyl-alpha-D-glucosamine: step 6/6. Functionally, transfers the gamma-phosphate of ATP to the 4'-position of a tetraacyldisaccharide 1-phosphate intermediate (termed DS-1-P) to form tetraacyldisaccharide 1,4'-bis-phosphate (lipid IVA). The protein is Tetraacyldisaccharide 4'-kinase of Rhodopseudomonas palustris (strain TIE-1).